The chain runs to 277 residues: R-spondin-3 (277 aa).

Positions 1–21 (MHLRLISCFFIILNFMEYIGS) are cleaved as a signal peptide. 2 FU repeats span residues 35 to 86 (PNVS…GYYG) and 92 to 135 (INKC…GLEA). Asparagine 36 is a glycosylation site (N-linked (GlcNAc...) asparagine). Intrachain disulfides connect cysteine 41/cysteine 48, cysteine 45/cysteine 54, cysteine 57/cysteine 76, cysteine 80/cysteine 95, cysteine 98/cysteine 105, cysteine 102/cysteine 111, cysteine 114/cysteine 125, cysteine 129/cysteine 142, cysteine 148/cysteine 190, cysteine 159/cysteine 166, and cysteine 199/cysteine 206. The region spanning 147-207 (HCEASEWSPW…TCIVQRKKCS (61 aa)) is the TSP type-1 domain. The segment at 210–277 (ERGKKGRERK…QKSVSVSTVH (68 aa)) is disordered. The span at 213–223 (KKGRERKRKKL) shows a compositional bias: basic residues. Positions 232–245 (SSSSDSKGLESSIE) are enriched in low complexity.

This sequence belongs to the R-spondin family. As to quaternary structure, interacts with the extracellular domain of FZD8 and LRP6. It however does not form a ternary complex with FZD8 and LRP6. Interacts with WNT1. Binds heparin. Interacts with LGR4, LGR5 and LGR6. Highly expressed in endothelial cells.

The protein resides in the secreted. Activator of the canonical Wnt signaling pathway by acting as a ligand for LGR4-6 receptors, which acts as a key regulator of angiogenesis. Upon binding to LGR4-6 (LGR4, LGR5 or LGR6), LGR4-6 associate with phosphorylated LRP6 and frizzled receptors that are activated by extracellular Wnt receptors, triggering the canonical Wnt signaling pathway to increase expression of target genes. Also regulates the canonical Wnt/beta-catenin-dependent pathway and non-canonical Wnt signaling by acting as an inhibitor of ZNRF3, an important regulator of the Wnt signaling pathway. Acts as a ligand for frizzled FZD8 and LRP6. May negatively regulate the TGF-beta pathway. Acts as a key regulator of angiogenesis by controlling vascular stability and pruning: acts by activating the non-canonical Wnt signaling pathway in endothelial cells. Can also amplify Wnt signaling pathway independently of LGR4-6 receptors, possibly by acting as a direct antagonistic ligand to RNF43 and ZNRF3. In Mus musculus (Mouse), this protein is R-spondin-3 (Rspo3).